The primary structure comprises 202 residues: Probable molybdenum cofactor guanylyltransferase (202 aa).

GTP is bound by residues 9–11 (VAG), Lys-22, Asn-50, Asp-77, and Asp-102. Residue Asp-102 coordinates Mg(2+).

The protein belongs to the MobA family. Mg(2+) serves as cofactor.

The protein localises to the cytoplasm. It carries out the reaction Mo-molybdopterin + GTP + H(+) = Mo-molybdopterin guanine dinucleotide + diphosphate. In terms of biological role, transfers a GMP moiety from GTP to Mo-molybdopterin (Mo-MPT) cofactor (Moco or molybdenum cofactor) to form Mo-molybdopterin guanine dinucleotide (Mo-MGD) cofactor. The protein is Probable molybdenum cofactor guanylyltransferase of Natronomonas pharaonis (strain ATCC 35678 / DSM 2160 / CIP 103997 / JCM 8858 / NBRC 14720 / NCIMB 2260 / Gabara) (Halobacterium pharaonis).